Reading from the N-terminus, the 707-residue chain is Protein O-mannosyl-transferase TMEM260 (707 aa).

8 consecutive transmembrane segments (helical) span residues glycine 28–valine 48, tyrosine 71–alanine 91, valine 94–phenylalanine 114, isoleucine 141–valine 161, asparagine 189–leucine 209, leucine 222–leucine 242, asparagine 318–tryptophan 338, and phenylalanine 356–valine 376. The Lumenal portion of the chain corresponds to serine 377–valine 707. Asparagine 407, asparagine 535, and asparagine 568 each carry an N-linked (GlcNAc...) asparagine glycan.

The protein belongs to the glycosyltransferase 117 (GT117) family. As to expression, expressed in brain, heart, kidney, liver, lung, pancreas and placenta but are not detected in skeletal muscle.

It localises to the endoplasmic reticulum membrane. The protein localises to the membrane. The catalysed reaction is a di-trans,poly-cis-dolichyl beta-D-mannosyl phosphate + L-seryl-[protein] = 3-O-(alpha-D-mannosyl)-L-seryl-[protein] + a di-trans,poly-cis-dolichyl phosphate + H(+). It carries out the reaction a di-trans,poly-cis-dolichyl beta-D-mannosyl phosphate + L-threonyl-[protein] = 3-O-(alpha-D-mannosyl)-L-threonyl-[protein] + a di-trans,poly-cis-dolichyl phosphate + H(+). Functionally, O-mannosyl-transferase that transfers mannosyl residues to the hydroxyl group of serine or threonine residues of proteins. Specifically glycosylates the IPT/TIG domain of target proteins, such as MET and MST1R/RON. TMEM260-mediated O-mannosylated residues are composed of single mannose glycans that are not elongated or modified. The polypeptide is Protein O-mannosyl-transferase TMEM260 (Homo sapiens (Human)).